Here is a 307-residue protein sequence, read N- to C-terminus: Membrane protein insertase YidC 1 (307 aa).

The signal sequence occupies residues 1-22; sequence MKSKKGLTLTITLGTLALFLSG. Cys23 carries the N-palmitoyl cysteine lipid modification. Cys23 carries S-diacylglycerol cysteine lipidation. Helical transmembrane passes span 59 to 79, 136 to 156, 177 to 197, 205 to 225, and 226 to 246; these read YGWA…PMMI, GIGC…YYAI, LILA…SMIG, TMRL…MSAP, and AGLG…TLII. The segment at 260-307 is disordered; that stretch reads ELKKHPIKTPTPTQPKPINATESKPSHPRPQNNAGRGRNAGKQQRHHK.

Belongs to the OXA1/ALB3/YidC family. Type 2 subfamily.

It localises to the cell membrane. Its function is as follows. Required for the insertion and/or proper folding and/or complex formation of integral membrane proteins into the membrane. Involved in integration of membrane proteins that insert both dependently and independently of the Sec translocase complex, as well as at least some lipoproteins. In Lactiplantibacillus plantarum (strain ATCC BAA-793 / NCIMB 8826 / WCFS1) (Lactobacillus plantarum), this protein is Membrane protein insertase YidC 1.